Consider the following 453-residue polypeptide: MEKENITIDPRSSFTPSSSADIPVPPDGLVQRSTRIKRIQTTAMLLLFFAAVINYLDRSSLSVANLTIREELGLSATEIGALLSVFSLAYGIAQLPCGPLLDRKGPRLMLGLGMFFWSLFQAMSGMVHNFTQFVLVRIGMGIGEAPMNPCGVKVINDWFNIKERGRPMGFFNAASTIGVAVSPPILAAMMLVMGWRGMFITIGVLGIFLAIGWYMLYRNREHVELTAVEQAYLNAGSVNARRDPLSFAEWRSLFRNRTMWGMMLGFSGINYTAWLYLAWLPGYLQTAYNLDLKSTGLMAAIPFLFGAAGMLVNGYVTDWLVKGGMAPIKSRKICIIAGMFCSAAFTLIVPQATTSMTAVLLIGMALFCIHFAGTSCWGLIHVAVASRMTASVGSIQNFASFICASFAPIITGFIVDTTHSFRLALIICGCVTAAGALAYIFLVRQPINDPRKD.

The segment at 1 to 23 is disordered; the sequence is MEKENITIDPRSSFTPSSSADIP. Residues 1–42 are Periplasmic-facing; sequence MEKENITIDPRSSFTPSSSADIPVPPDGLVQRSTRIKRIQTT. Residues 10 to 20 show a composition bias toward polar residues; it reads PRSSFTPSSSA. A helical membrane pass occupies residues 43–63; it reads AMLLLFFAAVINYLDRSSLSV. The Cytoplasmic portion of the chain corresponds to 64–71; that stretch reads ANLTIREE. Residues 72-92 form a helical membrane-spanning segment; it reads LGLSATEIGALLSVFSLAYGI. The Periplasmic portion of the chain corresponds to 93–107; that stretch reads AQLPCGPLLDRKGPR. A helical membrane pass occupies residues 108 to 128; it reads LMLGLGMFFWSLFQAMSGMVH. Over 129–174 the chain is Cytoplasmic; it reads NFTQFVLVRIGMGIGEAPMNPCGVKVINDWFNIKERGRPMGFFNAA. A helical transmembrane segment spans residues 175-195; sequence STIGVAVSPPILAAMMLVMGW. Position 196 (Arg196) is a topological domain, periplasmic. Residues 197 to 217 traverse the membrane as a helical segment; sequence GMFITIGVLGIFLAIGWYMLY. Topologically, residues 218 to 259 are cytoplasmic; that stretch reads RNREHVELTAVEQAYLNAGSVNARRDPLSFAEWRSLFRNRTM. A helical membrane pass occupies residues 260 to 280; that stretch reads WGMMLGFSGINYTAWLYLAWL. Topologically, residues 281-295 are periplasmic; it reads PGYLQTAYNLDLKST. Residues 296-316 traverse the membrane as a helical segment; sequence GLMAAIPFLFGAAGMLVNGYV. The Cytoplasmic portion of the chain corresponds to 317–332; that stretch reads TDWLVKGGMAPIKSRK. A helical transmembrane segment spans residues 333 to 353; the sequence is ICIIAGMFCSAAFTLIVPQAT. Topologically, residues 354–359 are periplasmic; it reads TSMTAV. A helical membrane pass occupies residues 360 to 380; it reads LLIGMALFCIHFAGTSCWGLI. The Cytoplasmic portion of the chain corresponds to 381–394; it reads HVAVASRMTASVGS. The chain crosses the membrane as a helical span at residues 395–415; it reads IQNFASFICASFAPIITGFIV. Over 416 to 422 the chain is Periplasmic; that stretch reads DTTHSFR. The helical transmembrane segment at 423-443 threads the bilayer; the sequence is LALIICGCVTAAGALAYIFLV. The Cytoplasmic portion of the chain corresponds to 444-453; the sequence is RQPINDPRKD.

It belongs to the major facilitator superfamily. Phthalate permease family.

The protein localises to the cell inner membrane. The enzyme catalyses L-galactonate(in) + H(+)(in) = L-galactonate(out) + H(+)(out). Its function is as follows. Probably responsible for the transport of L-galactonate from the periplasm across the inner membrane. Is essential for growth on L-galactonate as the sole carbon source. This chain is Probable L-galactonate transporter (lgoT), found in Escherichia coli (strain K12).